The primary structure comprises 115 residues: Colicin-Ib immunity protein (115 aa).

Transmembrane regions (helical) follow at residues 7 to 27 (VKYLLKSLIPILIILTVFYLG), 38 to 58 (FYAFIGCIISAITFPFSMRII), and 87 to 107 (IFELFCFVISVPVVAIYLIFI).

It localises to the cell membrane. Functionally, this protein is able to protect a cell, which harbors the plasmid IncI1 ColIb-P9 encoding colicin Ib, against colicin Ib. The protein is Colicin-Ib immunity protein of Escherichia coli.